The following is a 206-amino-acid chain: Large ribosomal subunit protein mL62 (206 aa).

A mitochondrion-targeting transit peptide spans Met1 to Ala29. Residue Gln90 is modified to N5-methylglutamine.

It belongs to the prokaryotic/mitochondrial release factor family. Mitochondrion-specific ribosomal protein mL62 subfamily. As to quaternary structure, component of the mitochondrial ribosome large subunit (39S) which comprises a 16S rRNA and about 50 distinct proteins. Post-translationally, methylation of glutamine in the GGQ triplet by HEMK1.

The protein resides in the mitochondrion. It carries out the reaction an N-acyl-L-alpha-aminoacyl-tRNA + H2O = an N-acyl-L-amino acid + a tRNA + H(+). In terms of biological role, essential peptidyl-tRNA hydrolase component of the mitochondrial large ribosomal subunit. Acts as a codon-independent translation release factor that has lost all stop codon specificity and directs the termination of translation in mitochondrion, possibly in case of abortive elongation. May be involved in the hydrolysis of peptidyl-tRNAs that have been prematurely terminated and thus in the recycling of stalled mitochondrial ribosomes. This chain is Large ribosomal subunit protein mL62, found in Mus musculus (Mouse).